The following is a 488-amino-acid chain: Glutamyl-tRNA(Gln) amidotransferase subunit A (488 aa).

Catalysis depends on charge relay system residues Lys-77 and Ser-152. The active-site Acyl-ester intermediate is the Ser-176.

It belongs to the amidase family. GatA subfamily. Heterotrimer of A, B and C subunits.

The catalysed reaction is L-glutamyl-tRNA(Gln) + L-glutamine + ATP + H2O = L-glutaminyl-tRNA(Gln) + L-glutamate + ADP + phosphate + H(+). Its function is as follows. Allows the formation of correctly charged Gln-tRNA(Gln) through the transamidation of misacylated Glu-tRNA(Gln) in organisms which lack glutaminyl-tRNA synthetase. The reaction takes place in the presence of glutamine and ATP through an activated gamma-phospho-Glu-tRNA(Gln). This chain is Glutamyl-tRNA(Gln) amidotransferase subunit A, found in Streptococcus equi subsp. zooepidemicus (strain MGCS10565).